Reading from the N-terminus, the 549-residue chain is Glucose-6-phosphate isomerase (549 aa).

The Proton donor role is filled by glutamate 355. Catalysis depends on residues histidine 386 and lysine 514.

Belongs to the GPI family.

Its subcellular location is the cytoplasm. The enzyme catalyses alpha-D-glucose 6-phosphate = beta-D-fructose 6-phosphate. It functions in the pathway carbohydrate biosynthesis; gluconeogenesis. The protein operates within carbohydrate degradation; glycolysis; D-glyceraldehyde 3-phosphate and glycerone phosphate from D-glucose: step 2/4. Functionally, catalyzes the reversible isomerization of glucose-6-phosphate to fructose-6-phosphate. In Salmonella arizonae (strain ATCC BAA-731 / CDC346-86 / RSK2980), this protein is Glucose-6-phosphate isomerase.